Here is a 427-residue protein sequence, read N- to C-terminus: Serine hydroxymethyltransferase (427 aa).

Residues Leu122 and 126 to 128 (GHL) contribute to the (6S)-5,6,7,8-tetrahydrofolate site. An N6-(pyridoxal phosphate)lysine modification is found at Lys231. Residue 355–357 (SPF) coordinates (6S)-5,6,7,8-tetrahydrofolate.

Belongs to the SHMT family. As to quaternary structure, homodimer. The cofactor is pyridoxal 5'-phosphate.

The protein resides in the cytoplasm. It catalyses the reaction (6R)-5,10-methylene-5,6,7,8-tetrahydrofolate + glycine + H2O = (6S)-5,6,7,8-tetrahydrofolate + L-serine. The protein operates within one-carbon metabolism; tetrahydrofolate interconversion. Its pathway is amino-acid biosynthesis; glycine biosynthesis; glycine from L-serine: step 1/1. Functionally, catalyzes the reversible interconversion of serine and glycine with tetrahydrofolate (THF) serving as the one-carbon carrier. This reaction serves as the major source of one-carbon groups required for the biosynthesis of purines, thymidylate, methionine, and other important biomolecules. Also exhibits THF-independent aldolase activity toward beta-hydroxyamino acids, producing glycine and aldehydes, via a retro-aldol mechanism. In Nostoc punctiforme (strain ATCC 29133 / PCC 73102), this protein is Serine hydroxymethyltransferase.